A 135-amino-acid polypeptide reads, in one-letter code: MRVGALDVGEARIGLAVGEEGVPLASGRGYLVRKTLEEDVEALLDFVRREGLGKLVVGLPLRTDLKESAQAGKVLPLVEALRARGVEVELWDERFTTKLAQERLKHAPKRLRRDKGKLDELAAVVLLEDYLARGI.

This sequence belongs to the YqgF nuclease family.

It localises to the cytoplasm. Could be a nuclease involved in processing of the 5'-end of pre-16S rRNA. This chain is Putative pre-16S rRNA nuclease, found in Thermus thermophilus (strain ATCC 27634 / DSM 579 / HB8).